The primary structure comprises 116 residues: Ribosome-binding factor A (116 aa).

Belongs to the RbfA family. As to quaternary structure, monomer. Binds 30S ribosomal subunits, but not 50S ribosomal subunits or 70S ribosomes.

It is found in the cytoplasm. Its function is as follows. One of several proteins that assist in the late maturation steps of the functional core of the 30S ribosomal subunit. Associates with free 30S ribosomal subunits (but not with 30S subunits that are part of 70S ribosomes or polysomes). Required for efficient processing of 16S rRNA. May interact with the 5'-terminal helix region of 16S rRNA. The sequence is that of Ribosome-binding factor A from Buchnera aphidicola subsp. Cinara cedri (strain Cc).